The following is a 136-amino-acid chain: Large ribosomal subunit protein bL17 (136 aa).

This sequence belongs to the bacterial ribosomal protein bL17 family. As to quaternary structure, part of the 50S ribosomal subunit. Contacts protein L32.

This Rhodopseudomonas palustris (strain BisA53) protein is Large ribosomal subunit protein bL17.